Consider the following 365-residue polypeptide: 2-aminoethylphosphonate--pyruvate transaminase (365 aa).

An N6-(pyridoxal phosphate)lysine modification is found at Lys194.

Belongs to the class-V pyridoxal-phosphate-dependent aminotransferase family. PhnW subfamily. Homodimer. Pyridoxal 5'-phosphate serves as cofactor.

The catalysed reaction is (2-aminoethyl)phosphonate + pyruvate = phosphonoacetaldehyde + L-alanine. In terms of biological role, involved in phosphonate degradation. The sequence is that of 2-aminoethylphosphonate--pyruvate transaminase from Bacillus mycoides (strain KBAB4) (Bacillus weihenstephanensis).